Consider the following 872-residue polypeptide: Probable cation-transporting P-type ATPase (872 aa).

Residues 1–41 (MNKWTGLSAAAVLESRAQHGANLIPTKKLTPFWLLFLEQFK) lie on the Cytoplasmic side of the membrane. The chain crosses the membrane as a helical span at residues 42–62 (SLVVILLLVATILSLVVAIIS). At 63 to 79 (GVNANWLFDHNLVIEWT) the chain is on the extracellular side. The chain crosses the membrane as a helical span at residues 80–100 (QPFVILITVLANSLIGSIQEF). At 101–237 (KAQKSAHTLK…TKLSPLQQKL (137 aa)) the chain is on the cytoplasmic side. Residues 238-257 (EKVGKWFSWFGLGLFVVVFL) traverse the membrane as a helical segment. Topologically, residues 258–275 (VQLGLLGFHNFSANWSIA) are extracellular. A helical membrane pass occupies residues 276–293 (LIGAIALVVAIIPEGLVT). Residues 294–642 (FINVIFALSV…EQGRKTFLTC (349 aa)) lie on the Cytoplasmic side of the membrane. D331 functions as the 4-aspartylphosphate intermediate in the catalytic mechanism. The Mg(2+) site is built by D587 and D591. The helical transmembrane segment at 643–662 (KRVLFNLFLTSIAGTIVVLL) threads the bilayer. The Extracellular segment spans residues 663-685 (GLFVLGEVFREQLSKANHNFQVF). Residues 686–706 (TPTQLLIINLFVHGFPAVALA) form a helical membrane-spanning segment. The Cytoplasmic segment spans residues 707–724 (IQPVQEKLMLKPFSTKNL). The chain crosses the membrane as a helical span at residues 725–747 (FYNRGGFDLIWQSLLLSFLTLLF). The Extracellular portion of the chain corresponds to 748-768 (YSLGMVYAINDPELGKSGDLI). A helical transmembrane segment spans residues 769 to 788 (NRAGATCGFMVLGGSAALNS). Residues 789–801 (LNLMVDRPLVATN) are Cytoplasmic-facing. Residues 802 to 824 (PKHYGIVWLGALSSIFVFLLIIF) form a helical membrane-spanning segment. Residues 825-842 (INPLGLVFSTLKDLTAHP) are Extracellular-facing. Residues 843-863 (VLIGYSFGGVLLYMTINEVVK) traverse the membrane as a helical segment. Residues 864-872 (LIRLSYGSV) lie on the Cytoplasmic side of the membrane.

Belongs to the cation transport ATPase (P-type) (TC 3.A.3) family. Type II subfamily.

It is found in the cell membrane. It catalyses the reaction ATP + H2O = ADP + phosphate + H(+). Its function is as follows. Could mediate calcium influx. This Mycoplasma pneumoniae (strain ATCC 29342 / M129 / Subtype 1) (Mycoplasmoides pneumoniae) protein is Probable cation-transporting P-type ATPase (pacL).